The sequence spans 385 residues: Sulfoquinovose monooxygenase (385 aa).

A disordered region spans residues 366–385; the sequence is AYGRVPSETPATPLGNGERH.

This sequence belongs to the SsuD family. As to quaternary structure, homodimer.

It catalyses the reaction 6-sulfo-D-quinovose + FMNH2 + O2 = 6-dehydro-D-glucose + FMN + sulfite + H2O + 2 H(+). Part of the sulfoquinovose monooxygenase (sulfo-SMO) pathway, a D-sulfoquinovose degradation pathway that enables the complete utilization of all carbons within sulfoquinovose (SQ) with concomitant production of inorganic sulfite. Catalyzes the oxidative desulfurization of sulfoquinovose to sulfite and 6-dehydro-D-glucose. Is highly specific for sulfoquinovose and cannot use sulfoquinovosyl glycerol. FMNH(2) is provided by the FMN reductase SmoA. This chain is Sulfoquinovose monooxygenase, found in Agrobacterium fabrum (strain C58 / ATCC 33970) (Agrobacterium tumefaciens (strain C58)).